The primary structure comprises 339 residues: Ketol-acid reductoisomerase (NADP(+)) (339 aa).

Residues Met-1 to Thr-182 form the KARI N-terminal Rossmann domain. Residues Tyr-24–Gln-27, Arg-48, Ser-51, Thr-53, and Asp-83–Gln-86 each bind NADP(+). Residue His-108 is part of the active site. Residue Gly-134 coordinates NADP(+). In terms of domain architecture, KARI C-terminal knotted spans Thr-183–Ile-328. Positions 191, 195, 227, and 231 each coordinate Mg(2+). Substrate is bound at residue Ser-252.

This sequence belongs to the ketol-acid reductoisomerase family. Mg(2+) is required as a cofactor.

The catalysed reaction is (2R)-2,3-dihydroxy-3-methylbutanoate + NADP(+) = (2S)-2-acetolactate + NADPH + H(+). The enzyme catalyses (2R,3R)-2,3-dihydroxy-3-methylpentanoate + NADP(+) = (S)-2-ethyl-2-hydroxy-3-oxobutanoate + NADPH + H(+). It participates in amino-acid biosynthesis; L-isoleucine biosynthesis; L-isoleucine from 2-oxobutanoate: step 2/4. The protein operates within amino-acid biosynthesis; L-valine biosynthesis; L-valine from pyruvate: step 2/4. In terms of biological role, involved in the biosynthesis of branched-chain amino acids (BCAA). Catalyzes an alkyl-migration followed by a ketol-acid reduction of (S)-2-acetolactate (S2AL) to yield (R)-2,3-dihydroxy-isovalerate. In the isomerase reaction, S2AL is rearranged via a Mg-dependent methyl migration to produce 3-hydroxy-3-methyl-2-ketobutyrate (HMKB). In the reductase reaction, this 2-ketoacid undergoes a metal-dependent reduction by NADPH to yield (R)-2,3-dihydroxy-isovalerate. The sequence is that of Ketol-acid reductoisomerase (NADP(+)) from Brucella canis (strain ATCC 23365 / NCTC 10854 / RM-666).